Reading from the N-terminus, the 208-residue chain is Uracil phosphoribosyltransferase (208 aa).

5-phospho-alpha-D-ribose 1-diphosphate is bound by residues arginine 78, arginine 103, and 130–138 (DPMLATGGS). Uracil contacts are provided by residues isoleucine 193 and 198-200 (GDA). Aspartate 199 contributes to the 5-phospho-alpha-D-ribose 1-diphosphate binding site.

It belongs to the UPRTase family. Mg(2+) serves as cofactor.

The enzyme catalyses UMP + diphosphate = 5-phospho-alpha-D-ribose 1-diphosphate + uracil. It functions in the pathway pyrimidine metabolism; UMP biosynthesis via salvage pathway; UMP from uracil: step 1/1. Allosterically activated by GTP. Catalyzes the conversion of uracil and 5-phospho-alpha-D-ribose 1-diphosphate (PRPP) to UMP and diphosphate. This chain is Uracil phosphoribosyltransferase, found in Photobacterium profundum (strain SS9).